An 873-amino-acid chain; its full sequence is DNA mismatch repair protein MutS (873 aa).

Residue 625–632 (GPNMGGKS) participates in ATP binding.

This sequence belongs to the DNA mismatch repair MutS family.

In terms of biological role, this protein is involved in the repair of mismatches in DNA. It is possible that it carries out the mismatch recognition step. This protein has a weak ATPase activity. The chain is DNA mismatch repair protein MutS from Xanthomonas euvesicatoria pv. vesicatoria (strain 85-10) (Xanthomonas campestris pv. vesicatoria).